A 1872-amino-acid chain; its full sequence is Histone acetyltransferase KAT6B (1872 aa).

The SAMD1-like winged helix (WH) domain maps to M1 to P77. Disordered regions lie at residues S70–L103 and K168–D207. The 74-residue stretch at R104–S177 folds into the H15 domain. A compositionally biased stretch (low complexity) spans P189–L202. 2 PHD-type zinc fingers span residues I214–C273 and C270–K321. At S356 the chain carries Phosphoserine. Residues E361–S417 form a disordered region. The negatively regulates HAT activity stretch occupies residues G362–G535. Residues S386–H395 are compositionally biased toward low complexity. Residue K491 forms a Glycyl lysine isopeptide (Lys-Gly) (interchain with G-Cter in SUMO2) linkage. Positions D533–P807 constitute an MYST-type HAT domain. The interval R536–A826 is catalytic. The C2HC MYST-type zinc finger occupies L566 to W591. The interval E570–A826 is interaction with BRPF1. K633 is modified (N6-acetyllysine; by autocatalysis). Acetyl-CoA-binding positions include S674 to I678 and Q683 to R689. E709 acts as the Proton donor/acceptor in catalysis. S713 is a binding site for acetyl-CoA. A compositionally biased stretch (low complexity) spans S846–K860. Disordered stretches follow at residues S846 to F1018, D1031 to A1252, M1283 to F1358, and D1388 to V1418. An N6-acetyllysine mark is found at K856, K860, and K862. S866 carries the phosphoserine modification. The segment covering S887–S909 has biased composition (acidic residues). Over residues I910–S924 the composition is skewed to polar residues. Basic residues predominate over residues I925–I944. The span at S946–V959 shows a compositional bias: low complexity. A compositionally biased stretch (basic residues) spans P991–K1004. 2 stretches are compositionally biased toward basic and acidic residues: residues D1031–K1047 and E1094–T1114. Positions E1155–V1176 are enriched in acidic residues. Over residues T1177–D1207 the composition is skewed to basic and acidic residues. The span at H1208 to E1217 shows a compositional bias: acidic residues. Composition is skewed to basic and acidic residues over residues N1238–A1252 and Q1310–D1320. Residues E1339–Q1349 show a composition bias toward polar residues. The segment at P1359 to R1872 is interaction with RUNX1 and RUNX2. Low complexity predominate over residues S1393–V1410.

The protein belongs to the MYST (SAS/MOZ) family. In terms of assembly, component of the MOZ/MORF complex composed at least of ING5, KAT6A, KAT6B, MEAF6 and one of BRPF1, BRD1/BRPF2 and BRPF3. Interacts with RUNX1 and RUNX2. In terms of processing, autoacetylation at Lys-633 is required for proper function. As to expression, ubiquitously expressed.

Its subcellular location is the nucleus. It carries out the reaction L-lysyl-[protein] + acetyl-CoA = N(6)-acetyl-L-lysyl-[protein] + CoA + H(+). Functionally, histone acetyltransferase which may be involved in both positive and negative regulation of transcription. Required for RUNX2-dependent transcriptional activation. Component of the MOZ/MORF complex which has a histone H3 acetyltransferase activity. Involved in cerebral cortex development. This Mus musculus (Mouse) protein is Histone acetyltransferase KAT6B (Kat6b).